The chain runs to 294 residues: Cytidine deaminase (294 aa).

2 CMP/dCMP-type deaminase domains span residues 48-168 (DEDA…FGPK) and 186-294 (LTGD…TLLA). Residue 89-91 (NME) coordinates substrate. Residue His102 coordinates Zn(2+). Glu104 (proton donor) is an active-site residue. Cys129 and Cys132 together coordinate Zn(2+).

This sequence belongs to the cytidine and deoxycytidylate deaminase family. In terms of assembly, homodimer. It depends on Zn(2+) as a cofactor.

The enzyme catalyses cytidine + H2O + H(+) = uridine + NH4(+). It catalyses the reaction 2'-deoxycytidine + H2O + H(+) = 2'-deoxyuridine + NH4(+). Its function is as follows. This enzyme scavenges exogenous and endogenous cytidine and 2'-deoxycytidine for UMP synthesis. The protein is Cytidine deaminase of Enterobacter sp. (strain 638).